The sequence spans 471 residues: Cytidine and dCMP deaminase domain-containing protein 1 (471 aa).

The disordered stretch occupies residues 1–27; sequence MAESNSWRSHRESDGNRSIPNGDDARN. 2 consecutive CMP/dCMP-type deaminase domains span residues 57–153 and 312–460; these read LWME…LLSE and GVIR…KLNG. Residues histidine 99, cysteine 124, cysteine 127, and histidine 393 each coordinate Zn(2+). Catalysis depends on glutamate 395, which acts as the Proton donor. Zn(2+) contacts are provided by cysteine 421 and cysteine 424.

The protein belongs to the cytidine and deoxycytidylate deaminase family. Requires Zn(2+) as cofactor.

It catalyses the reaction 2'-deoxycytidine + H2O + H(+) = 2'-deoxyuridine + NH4(+). The catalysed reaction is cytidine + H2O + H(+) = uridine + NH4(+). Functionally, catalyzes the deamination of cytidine and deoxycytidine into uridine and deoxyuridine, respectively. The polypeptide is Cytidine and dCMP deaminase domain-containing protein 1 (cdadc1) (Danio rerio (Zebrafish)).